Reading from the N-terminus, the 261-residue chain is NAD-capped RNA hydrolase NudC (261 aa).

Residue Arg-74 coordinates substrate. The Zn(2+) site is built by Cys-103, Cys-106, Cys-121, and Cys-124. Tyr-129 is a binding site for substrate. The Nudix hydrolase domain occupies 130–253 (PRIFPCIIVA…TIARALIEQT (124 aa)). 3 residues coordinate a divalent metal cation: Ala-163, Glu-179, and Glu-183. The Nudix box motif lies at 164–185 (GFVEVGETLEQCVAREVKEETG). 197–204 (QPWAFPSS) contributes to the substrate binding site. Glu-224 contacts a divalent metal cation. Ala-246 contributes to the substrate binding site.

Belongs to the Nudix hydrolase family. NudC subfamily. As to quaternary structure, homodimer. Mg(2+) is required as a cofactor. It depends on Mn(2+) as a cofactor. Requires Zn(2+) as cofactor.

The catalysed reaction is a 5'-end NAD(+)-phospho-ribonucleoside in mRNA + H2O = a 5'-end phospho-adenosine-phospho-ribonucleoside in mRNA + beta-nicotinamide D-ribonucleotide + 2 H(+). It carries out the reaction NAD(+) + H2O = beta-nicotinamide D-ribonucleotide + AMP + 2 H(+). The enzyme catalyses NADH + H2O = reduced beta-nicotinamide D-ribonucleotide + AMP + 2 H(+). MRNA decapping enzyme that specifically removes the nicotinamide adenine dinucleotide (NAD) cap from a subset of mRNAs by hydrolyzing the diphosphate linkage to produce nicotinamide mononucleotide (NMN) and 5' monophosphate mRNA. The NAD-cap is present at the 5'-end of some mRNAs and stabilizes RNA against 5'-processing. Has preference for mRNAs with a 5'-end purine. Catalyzes the hydrolysis of a broad range of dinucleotide pyrophosphates. The polypeptide is NAD-capped RNA hydrolase NudC (Vibrio vulnificus (strain CMCP6)).